A 392-amino-acid chain; its full sequence is Bone morphogenetic protein 15 (392 aa).

The signal sequence occupies residues 1–18; it reads MVLLSILRILFLCELVLF. A propeptide spanning residues 19 to 267 is cleaved from the precursor; it reads MEHRAQMAEG…ERESLLRRTR (249 aa). N-linked (GlcNAc...) asparagine glycans are attached at residues Asn87, Asn147, and Asn237. Gln268 carries the pyrrolidone carboxylic acid; in P16 and P17 modification. Ser273 carries the post-translational modification Phosphoserine; in P16. Thr277 is a glycosylation site (O-linked (HexNAc...) threonine; in P17). Disulfide bonds link Cys291–Cys357, Cys320–Cys389, and Cys324–Cys391. A glycan (N-linked (GlcNAc...) asparagine) is linked at Asn373.

Belongs to the TGF-beta family. In terms of assembly, homodimer. But, in contrast to other members of this family, cannot be disulfide-linked.

It localises to the secreted. May be involved in follicular development. Oocyte-specific growth/differentiation factor that stimulates folliculogenesis and granulosa cell (GC) growth. This Homo sapiens (Human) protein is Bone morphogenetic protein 15 (BMP15).